We begin with the raw amino-acid sequence, 272 residues long: Putative phosphoenolpyruvate synthase regulatory protein (272 aa).

152–159 (GVSRCGKT) provides a ligand contact to ADP.

Belongs to the pyruvate, phosphate/water dikinase regulatory protein family. PSRP subfamily.

The enzyme catalyses [pyruvate, water dikinase] + ADP = [pyruvate, water dikinase]-phosphate + AMP + H(+). It carries out the reaction [pyruvate, water dikinase]-phosphate + phosphate + H(+) = [pyruvate, water dikinase] + diphosphate. In terms of biological role, bifunctional serine/threonine kinase and phosphorylase involved in the regulation of the phosphoenolpyruvate synthase (PEPS) by catalyzing its phosphorylation/dephosphorylation. The sequence is that of Putative phosphoenolpyruvate synthase regulatory protein from Pseudomonas putida (strain GB-1).